A 124-amino-acid chain; its full sequence is Small ribosomal subunit protein uS12 (124 aa).

The disordered stretch occupies residues 1-28; the sequence is MPTISQLVGSERKRLTKKTKSPALKSCP. Asp-89 bears the 3-methylthioaspartic acid mark. The interval 104–124 is disordered; sequence TAGVKDRRQSRSKYGAKAPKD.

It belongs to the universal ribosomal protein uS12 family. Part of the 30S ribosomal subunit. Contacts proteins S8 and S17. May interact with IF1 in the 30S initiation complex.

In terms of biological role, with S4 and S5 plays an important role in translational accuracy. Functionally, interacts with and stabilizes bases of the 16S rRNA that are involved in tRNA selection in the A site and with the mRNA backbone. Located at the interface of the 30S and 50S subunits, it traverses the body of the 30S subunit contacting proteins on the other side and probably holding the rRNA structure together. The combined cluster of proteins S8, S12 and S17 appears to hold together the shoulder and platform of the 30S subunit. This Prochlorococcus marinus (strain MIT 9301) protein is Small ribosomal subunit protein uS12.